We begin with the raw amino-acid sequence, 314 residues long: GTP-binding protein gtr2 (314 aa).

S17, S18, S37, H118, and D121 together coordinate GTP.

Belongs to the GTR/RAG GTP-binding protein family.

The protein localises to the vacuole membrane. It is found in the cytoplasm. Its subcellular location is the nucleus. It catalyses the reaction GTP + H2O = GDP + phosphate + H(+). Its function is as follows. GTPase involved in activation of the TORC1 signaling pathway, which promotes growth and represses autophagy in nutrient-rich conditions. Also required for TORC1 inactivation during nitrogen starvation. The protein is GTP-binding protein gtr2 (gtr2) of Schizosaccharomyces pombe (strain 972 / ATCC 24843) (Fission yeast).